A 354-amino-acid polypeptide reads, in one-letter code: 3-dehydroquinate synthase (354 aa).

NAD(+)-binding positions include 100–104 (GATGD), 124–125 (TT), Lys-136, Lys-145, and 163–166 (FLAT). Positions 178, 242, and 256 each coordinate Zn(2+).

It belongs to the sugar phosphate cyclases superfamily. Dehydroquinate synthase family. The cofactor is Co(2+). Requires Zn(2+) as cofactor. NAD(+) is required as a cofactor.

It is found in the cytoplasm. It carries out the reaction 7-phospho-2-dehydro-3-deoxy-D-arabino-heptonate = 3-dehydroquinate + phosphate. Its pathway is metabolic intermediate biosynthesis; chorismate biosynthesis; chorismate from D-erythrose 4-phosphate and phosphoenolpyruvate: step 2/7. Catalyzes the conversion of 3-deoxy-D-arabino-heptulosonate 7-phosphate (DAHP) to dehydroquinate (DHQ). In Staphylococcus haemolyticus (strain JCSC1435), this protein is 3-dehydroquinate synthase.